Reading from the N-terminus, the 198-residue chain is Probable GTP-binding protein EngB (198 aa).

Positions 22-195 (DLPEIALAGR…WKAIHKFTKT (174 aa)) constitute an EngB-type G domain. GTP contacts are provided by residues 30–37 (GRSNVGKS), 57–61 (GKTQT), 75–78 (DVPG), 142–145 (TKAD), and 174–176 (FSS). Mg(2+)-binding residues include Ser37 and Thr59.

Belongs to the TRAFAC class TrmE-Era-EngA-EngB-Septin-like GTPase superfamily. EngB GTPase family. Mg(2+) serves as cofactor.

Its function is as follows. Necessary for normal cell division and for the maintenance of normal septation. This Bacillus cytotoxicus (strain DSM 22905 / CIP 110041 / 391-98 / NVH 391-98) protein is Probable GTP-binding protein EngB.